Here is a 96-residue protein sequence, read N- to C-terminus: (4S)-4-hydroxy-5-phosphonooxypentane-2,3-dione isomerase (96 aa).

One can recognise an ABM domain in the interval 2–91; it reads HVTLVEINVK…MTGPRKKTTF (90 aa).

The protein belongs to the LsrG family. Homodimer.

It localises to the cytoplasm. It carries out the reaction (2S)-2-hydroxy-3,4-dioxopentyl phosphate = 3-hydroxy-2,4-dioxopentyl phosphate. Involved in the degradation of phospho-AI-2, thereby terminating induction of the lsr operon and closing the AI-2 signaling cycle. Catalyzes the conversion of (4S)-4-hydroxy-5-phosphonooxypentane-2,3-dione (P-DPD) to 3-hydroxy-5-phosphonooxypentane-2,4-dione (P-HPD). This is (4S)-4-hydroxy-5-phosphonooxypentane-2,3-dione isomerase from Yersinia enterocolitica serotype O:8 / biotype 1B (strain NCTC 13174 / 8081).